A 439-amino-acid chain; its full sequence is Probable threonine protease PRSS50 (439 aa).

Disordered regions lie at residues 1 to 22 and 48 to 130; these read MEPW…VPGA and ERIR…TMAP. The N-terminal stretch at 1–47 is a signal peptide; that stretch reads MEPWCGAEVRGQGPQGPRVPGASRSRSRALLLLLLLLLLLLPRRPAG. Positions 9-21 are enriched in low complexity; sequence VRGQGPQGPRVPG. Over 48-415 the chain is Extracellular; sequence ERIRPRRPPR…WIWDRLSGEP (368 aa). Residues 51–61 show a composition bias toward basic residues; sequence RPRRPPRHAHP. Residues 112-127 show a composition bias toward low complexity; it reads QAQTNQTTTAPPNSQT. N-linked (GlcNAc...) asparagine glycans are attached at residues Asn-116 and Asn-187. One can recognise a Peptidase S1 domain in the interval 157–412; sequence FCGSSHEPDP…YRPWIWDRLS (256 aa). Residues Cys-192 and Cys-208 are joined by a disulfide bond. His-207 (charge relay system) is an active-site residue. Asn-226 carries N-linked (GlcNAc...) asparagine glycosylation. Residue Asp-260 is the Charge relay system of the active site. 3 disulfides stabilise this stretch: Cys-294-Cys-370, Cys-327-Cys-350, and Cys-360-Cys-388. Thr-364 acts as the Charge relay system in catalysis. The chain crosses the membrane as a helical span at residues 416–436; it reads LALPAPSRTLLLAFLLLLILL. Over 437–439 the chain is Cytoplasmic; sequence GTL.

It belongs to the peptidase S1 family.

It is found in the membrane. Functionally, may be involved in proteolysis through its threonine endopeptidase activity. This Mus musculus (Mouse) protein is Probable threonine protease PRSS50 (Prss50).